We begin with the raw amino-acid sequence, 478 residues long: Putative L-amino-acid oxidase YobN (478 aa).

Residues Ser34, Glu53, Arg61, and 80–81 (MR) contribute to the FAD site. The substrate site is built by Arg81 and Tyr369. Residues Glu451 and 460–463 (MQGA) each bind FAD.

This sequence belongs to the flavin monoamine oxidase family. FIG1 subfamily. It depends on FAD as a cofactor.

The enzyme catalyses an L-alpha-amino acid + O2 + H2O = a 2-oxocarboxylate + H2O2 + NH4(+). The polypeptide is Putative L-amino-acid oxidase YobN (yobN) (Bacillus subtilis (strain 168)).